A 165-amino-acid polypeptide reads, in one-letter code: E3 ubiquitin ligase complex SCF subunit sconC (165 aa).

Residues 106-165 (ILAANYLDIKALLDVGCKTVANMIKGKSPEEIRKTFNIQNDFTPEEEDQIRRENEWAEDR) are interaction with the F-box domain of F-box proteins.

The protein belongs to the SKP1 family. Component of the SCF (SKP1-CUL1-F-box protein) E3 ubiquitin ligase complexes.

It functions in the pathway protein modification; protein ubiquitination. Its function is as follows. Essential component of the SCF (SKP1-CUL1-F-box protein) E3 ubiquitin ligase complexes, which mediate the ubiquitination and subsequent proteasomal degradation of target proteins. Controls sulfur metabolite repression, probably by mediating the inactivation or degradation of the metR transcription factor. In Arthroderma otae (strain ATCC MYA-4605 / CBS 113480) (Microsporum canis), this protein is E3 ubiquitin ligase complex SCF subunit sconC (sconC).